Reading from the N-terminus, the 125-residue chain is Gene 61 protein (125 aa).

The protein is Gene 61 protein (61) of Mycobacterium phage D29 (Mycobacteriophage D29).